The primary structure comprises 193 residues: Ion-translocating oxidoreductase complex subunit A (193 aa).

6 consecutive transmembrane segments (helical) span residues 5 to 25 (VLLL…FLGL), 39 to 59 (IGMS…SYLV), 63 to 83 (ILIP…VIAV), 102 to 122 (LLGI…VALL), 134 to 154 (AVYG…FAAL), and 171 to 191 (SIAL…TGLV).

The protein belongs to the NqrDE/RnfAE family. The complex is composed of six subunits: RnfA, RnfB, RnfC, RnfD, RnfE and RnfG.

The protein resides in the cell inner membrane. Its function is as follows. Part of a membrane-bound complex that couples electron transfer with translocation of ions across the membrane. The protein is Ion-translocating oxidoreductase complex subunit A of Pseudoalteromonas translucida (strain TAC 125).